Consider the following 327-residue polypeptide: GPI-linked NAD(P)(+)--arginine ADP-ribosyltransferase 1 (327 aa).

Residues 1–22 (MQMPAMMSLLLVSVGLMEALQA) form the signal peptide. Intrachain disulfides connect Cys-53–Cys-277 and Cys-174–Cys-224. N-linked (GlcNAc...) asparagine glycosylation occurs at Asn-65. Positions 73 to 273 (QVYADSWTLA…IYLRALGKHS (201 aa)) constitute a TR mART core domain. 2 residues coordinate NAD(+): Tyr-121 and Arg-179. Active-site residues include Arg-179 and Ser-202. Ser-233 provides a ligand contact to NAD(+). Glu-240 is an active-site residue. Asn-253 carries N-linked (GlcNAc...) asparagine glycosylation. Ser-295 carries GPI-anchor amidated serine lipidation. Positions 296–327 (AMGQSPLSAVWSLLLLLWFLVVRAFPDGPGLL) are cleaved as a propeptide — removed in mature form.

It belongs to the Arg-specific ADP-ribosyltransferase family.

It localises to the sarcoplasmic reticulum membrane. The enzyme catalyses L-arginyl-[protein] + NAD(+) = N(omega)-(ADP-D-ribosyl)-L-arginyl-[protein] + nicotinamide + H(+). In terms of biological role, has ADP-ribosyltransferase activity toward GLP1R. The sequence is that of GPI-linked NAD(P)(+)--arginine ADP-ribosyltransferase 1 (ART1) from Homo sapiens (Human).